The sequence spans 234 residues: Peptidase E (234 aa).

Catalysis depends on charge relay system residues Ser-120, Asp-135, and His-157.

This sequence belongs to the peptidase S51 family.

It is found in the cytoplasm. It catalyses the reaction Dipeptidase E catalyzes the hydrolysis of dipeptides Asp-|-Xaa. It does not act on peptides with N-terminal Glu, Asn or Gln, nor does it cleave isoaspartyl peptides.. In terms of biological role, hydrolyzes dipeptides containing N-terminal aspartate residues. May play a role in allowing the cell to use peptide aspartate to spare carbon otherwise required for the synthesis of the aspartate family of amino acids. This chain is Peptidase E, found in Salmonella gallinarum (strain 287/91 / NCTC 13346).